A 526-amino-acid polypeptide reads, in one-letter code: Glutamyl-tRNA(Gln) amidotransferase subunit A, mitochondrial (526 aa).

Catalysis depends on charge relay system residues lysine 76 and serine 171. The active-site Acyl-ester intermediate is serine 195.

It belongs to the amidase family. GatA subfamily. As to quaternary structure, subunit of the heterotrimeric GatCAB amidotransferase (AdT) complex, composed of A (QRSL1), B (GATB) and C (GATC) subunits.

It localises to the mitochondrion. The enzyme catalyses L-glutamyl-tRNA(Gln) + L-glutamine + ATP + H2O = L-glutaminyl-tRNA(Gln) + L-glutamate + ADP + phosphate + H(+). Functionally, allows the formation of correctly charged Gln-tRNA(Gln) through the transamidation of misacylated Glu-tRNA(Gln) in the mitochondria. The reaction takes place in the presence of glutamine and ATP through an activated gamma-phospho-Glu-tRNA(Gln). This Canis lupus familiaris (Dog) protein is Glutamyl-tRNA(Gln) amidotransferase subunit A, mitochondrial.